We begin with the raw amino-acid sequence, 91 residues long: Probable Fe(2+)-trafficking protein (91 aa).

The protein belongs to the Fe(2+)-trafficking protein family.

Could be a mediator in iron transactions between iron acquisition and iron-requiring processes, such as synthesis and/or repair of Fe-S clusters in biosynthetic enzymes. In Acidobacterium capsulatum (strain ATCC 51196 / DSM 11244 / BCRC 80197 / JCM 7670 / NBRC 15755 / NCIMB 13165 / 161), this protein is Probable Fe(2+)-trafficking protein.